Consider the following 99-residue polypeptide: Nucleoid-associated protein Cj1642 (99 aa).

The protein belongs to the YbaB/EbfC family. In terms of assembly, homodimer.

It localises to the cytoplasm. Its subcellular location is the nucleoid. Its function is as follows. Binds to DNA and alters its conformation. May be involved in regulation of gene expression, nucleoid organization and DNA protection. This Campylobacter jejuni subsp. jejuni serotype O:2 (strain ATCC 700819 / NCTC 11168) protein is Nucleoid-associated protein Cj1642.